The sequence spans 460 residues: MPTTPLRKTAMTTRQPIYKSLYFQVIVAIVIGILIGHFYPDTGKALKPLGDGFIKLIKMVIAPIIFCTVVSGIAGMQNMKSVGKTGGYALLYFEIVSTIALLIGLIVVNVVQPGAGMNIDVSTLDASKIAAYVTAGQDQSIVGFILNVIPNTIVGAFANGDILQVLMFSVIFGFALHRLGSYGKPVLDFIDRFAHVMFNIINMIMKLAPIGAFGAMAFTIGAYGVSSLVQLGQLMICFYITCALFVVLVLGAICRAHGFSIFKLVRYIREELLIVLGTSSSESALPRMLIKMERLGAKKSVVGLVIPTGYSFNLDGTSIYLTMAAVFIAQATNTHMDITHQITLLLVLLLSSKGAAGVTGSGFIVLAATLSAVGHLPVAGLALILGIDRFMSEARALTNLVGNAVATVVVAKWVGELDTDKLQSELASGGSAILETRPEDDLGVAEGPTPANAVNTTKTV.

Transmembrane regions (helical) follow at residues 20–40 (SLYFQVIVAIVIGILIGHFYP), 56–76 (LIKMVIAPIIFCTVVSGIAGM), 88–108 (YALLYFEIVSTIALLIGLIVV), 153–173 (IVGAFANGDILQVLMFSVIFG), 200–220 (IINMIMKLAPIGAFGAMAFTI), 234–254 (LMICFYITCALFVVLVLGAIC), 301–321 (VVGLVIPTGYSFNLDGTSIYL), 342–362 (ITLLLVLLLSSKGAAGVTGSG), and 364–384 (IVLAATLSAVGHLPVAGLALI). A disordered region spans residues 438–460 (PEDDLGVAEGPTPANAVNTTKTV).

It belongs to the dicarboxylate/amino acid:cation symporter (DAACS) (TC 2.A.23) family.

It is found in the cell inner membrane. Its function is as follows. Responsible for the transport of dicarboxylates such as succinate, fumarate, and malate from the periplasm across the membrane. This chain is C4-dicarboxylate transport protein, found in Pseudomonas savastanoi pv. phaseolicola (strain 1448A / Race 6) (Pseudomonas syringae pv. phaseolicola (strain 1448A / Race 6)).